A 533-amino-acid polypeptide reads, in one-letter code: Flavin-containing monooxygenase 5 (533 aa).

Arg-5 is modified (dimethylated arginine). FAD contacts are provided by residues 10–14, Glu-33, and 41–42; these read GAGAS and LW. Ser-54 carries the post-translational modification Phosphoserine. Residue Tyr-56 is modified to Phosphotyrosine. The residue at position 58 (Ser-58) is a Phosphoserine. 62–63 lines the FAD pocket; sequence NT. 196-199 is an NADP(+) binding site; the sequence is SGGD. Position 280 is a phosphoserine (Ser-280). Thr-284 is modified (phosphothreonine). Position 401 is a phosphoserine (Ser-401). A helical membrane pass occupies residues 513–533; it reads LVTVRVLMLAVAFFAVILAYF.

Belongs to the FMO family. The cofactor is FAD. As to expression, expressed in liver (at protein level). Expressed in the mucosal epithelium of the gastrointestinal tract.

It localises to the microsome membrane. The protein resides in the endoplasmic reticulum membrane. It carries out the reaction N,N-dimethylaniline + NADPH + O2 + H(+) = N,N-dimethylaniline N-oxide + NADP(+) + H2O. It catalyses the reaction NADPH + O2 + H(+) = H2O2 + NADP(+). The catalysed reaction is heptan-2-one + NADPH + O2 + H(+) = pentyl acetate + NADP(+) + H2O. The enzyme catalyses octan-3-one + NADPH + O2 + H(+) = pentyl propanoate + NADP(+) + H2O. It carries out the reaction octan-3-one + NADPH + O2 + H(+) = ethyl hexanoate + NADP(+) + H2O. It catalyses the reaction hexan-3-one + NADPH + O2 + H(+) = ethyl butanoate + NADP(+) + H2O. The catalysed reaction is hexan-3-one + NADPH + O2 + H(+) = propyl propanoate + NADP(+) + H2O. The enzyme catalyses heptan-4-one + NADPH + O2 + H(+) = propyl butanoate + NADP(+) + H2O. It carries out the reaction (2E)-geranial + NADPH + O2 + H(+) = (1E)-2,6-dimethylhepta-1,5-dien-1-yl formate + NADP(+) + H2O. It catalyses the reaction sulcatone + NADPH + O2 + H(+) = 4-methylpent-3-en-1-yl acetate + NADP(+) + H2O. In terms of biological role, acts as a Baeyer-Villiger monooxygenase on a broad range of substrates. Catalyzes the insertion of an oxygen atom into a carbon-carbon bond adjacent to a carbonyl, which converts ketones to esters. Active on diverse carbonyl compounds, whereas soft nucleophiles are mostly non- or poorly reactive. In contrast with other forms of FMO it is non- or poorly active on 'classical' substrates such as drugs, pesticides, and dietary components containing soft nucleophilic heteroatoms. Able to oxidize drug molecules bearing a carbonyl group on an aliphatic chain, such as nabumetone and pentoxifylline. Also, in the absence of substrates, shows slow but yet significant NADPH oxidase activity. Acts as a positive modulator of cholesterol biosynthesis as well as glucose homeostasis, promoting metabolic aging via pleiotropic effects. The polypeptide is Flavin-containing monooxygenase 5 (Mus musculus (Mouse)).